The primary structure comprises 546 residues: Sulfite oxidase, mitochondrial (546 aa).

The transit peptide at 1 to 80 directs the protein to the mitochondrion; it reads MLLQLYRSVV…YHEHRCRASQ (80 aa). Residues 83 to 162 enclose the Cytochrome b5 heme-binding domain; the sequence is PRMYSKEDVR…LAEYKIGELN (80 aa). Histidine 119 is a heme b binding site. Serine 124 bears the Phosphoserine mark. Residues histidine 144, glutamine 146, and histidine 148 each contribute to the heme b site. The interval 166–175 is hinge; the sequence is SMSPSVEASD. Residues 176–402 form a moco domain region; that stretch reads PYADDPIRHP…YSHWQRRDYK (227 aa). Residues 216–220, cysteine 265, aspartate 323, histidine 362, arginine 367, and 378–380 contribute to the Mo-molybdopterin site; these read FTRNH and HVK. The segment at 403–539 is homodimerization; that stretch reads GFSPSVDWDT…RGVLSNAWHR (137 aa).

In terms of assembly, homodimer. Heme b serves as cofactor. Mo-molybdopterin is required as a cofactor.

It localises to the mitochondrion intermembrane space. It catalyses the reaction sulfite + O2 + H2O = sulfate + H2O2. It functions in the pathway energy metabolism; sulfur metabolism. Its function is as follows. Catalyzes the oxidation of sulfite to sulfate, the terminal reaction in the oxidative degradation of sulfur-containing amino acids. This Mus musculus (Mouse) protein is Sulfite oxidase, mitochondrial (Suox).